A 172-amino-acid polypeptide reads, in one-letter code: Transmembrane protein 91 (172 aa).

The Extracellular portion of the chain corresponds to 1-97 (MDNSSIQELQ…SPLLPHDHLG (97 aa)). The segment at 60–86 (GLGEPETPDFEDTLSSDSDSDDDGGDR) is disordered. Acidic residues predominate over residues 65–83 (ETPDFEDTLSSDSDSDDDG). A helical transmembrane segment spans residues 98-118 (LAVFSVLCCFWPVGIAAFCLA). At 119-139 (HKTNKAWAKGDVQGAGAASRR) the chain is on the cytoplasmic side. A helical membrane pass occupies residues 140–160 (AFLLGVLAVGLGLCTYAAALV). Residues 161-172 (TLAAYLASRDPP) are Extracellular-facing.

Belongs to the CD225/Dispanin family.

It localises to the membrane. The sequence is that of Transmembrane protein 91 (Tmem91) from Mus musculus (Mouse).